Here is a 583-residue protein sequence, read N- to C-terminus: Radixin (583 aa).

The FERM domain occupies 5-295 (INVRVTTMDA…GNHELYMRRR (291 aa)). Residues 60–63 (KLNK) and K278 each bind a 1,2-diacyl-sn-glycero-3-phospho-(1D-myo-inositol). Disordered stretches follow at residues 310 to 336 (REEKHQKQLERAQLENEKKKREIAEKE) and 436 to 527 (KKKE…VKKQ). 2 stretches are compositionally biased toward basic and acidic residues: residues 436-447 (KKKEEEASEWQH) and 455-464 (DLEKTKEELK). A compositionally biased stretch (pro residues) spans 469 to 480 (APPPPPPPPVIP). 2 stretches are compositionally biased toward basic and acidic residues: residues 483–492 (ENEHDEHDEN) and 506–525 (MNHRSEEERVTETQKNERVK).

The protein resides in the cell membrane. Its subcellular location is the cytoplasm. It is found in the cytoskeleton. Functionally, probably plays a crucial role in the binding of the barbed end of actin filaments to the plasma membrane. The protein is Radixin (RDX) of Gallus gallus (Chicken).